The following is a 306-amino-acid chain: Non-specific ribonucleoside hydrolase RihC (306 aa).

Histidine 235 is an active-site residue.

Belongs to the IUNH family. RihC subfamily.

Functionally, hydrolyzes both purine and pyrimidine ribonucleosides with a broad-substrate specificity. The protein is Non-specific ribonucleoside hydrolase RihC of Salmonella paratyphi B (strain ATCC BAA-1250 / SPB7).